The primary structure comprises 616 residues: Zinc metalloproteinase-disintegrin-like ecarin (616 aa).

The first 20 residues, 1–20 (MIQILLVIICLAVFPYQGCS), serve as a signal peptide directing secretion. The propeptide occupies 21-190 (IILGSGNVND…EPIKKTLGLI (170 aa)). The region spanning 201 to 397 (KFIELVVVVD…YNPKCILDPP (197 aa)) is the Peptidase M12B domain. Residue E204 participates in Ca(2+) binding. 2 N-linked (GlcNAc...) asparagine glycosylation sites follow: N219 and N261. D288 provides a ligand contact to Ca(2+). N-linked (GlcNAc...) asparagine glycosylation is found at N295 and N326. Intrachain disulfides connect C312-C392, C352-C376, and C354-C359. A Zn(2+)-binding site is contributed by H337. The active site involves E338. Zn(2+)-binding residues include H341 and H347. Ca(2+) is bound by residues C392, V407, N410, I412, E414, E417, and D420. A Disintegrin domain is found at 405-491 (PAVCGNEIWE…ECPRNEFQRN (87 aa)). 14 cysteine pairs are disulfide-bonded: C408–C437, C419–C432, C421–C427, C431–C454, C445–C451, C450–C476, C463–C483, C470–C502, C495–C507, C514–C567, C529–C578, C542–C555, C562–C604, and C598–C609. The D/ECD-tripeptide motif lies at 469–471 (DCD). Positions 471, 472, and 486 each coordinate Ca(2+). An N-linked (GlcNAc...) asparagine glycan is attached at N497.

This sequence belongs to the venom metalloproteinase (M12B) family. P-III subfamily. P-IIIa sub-subfamily. In terms of assembly, monomer. Zn(2+) serves as cofactor. In terms of tissue distribution, expressed by the venom gland.

The protein localises to the secreted. Its function is as follows. Snake venom zinc metalloproteinase that catalyzes the conversion of prothrombin (F2) to alpha-thrombin through formation of a thrombin intermediate, thereby functioning as a procoagulant protein. Has a low Km for prothrombin and a high kcat. Cleaves the 320-Arg-Ile-321 bond in prothrombin and produces meizothrombin which is ultimately converted to alpha-thrombin by autolysis. The chain is Zinc metalloproteinase-disintegrin-like ecarin from Echis carinatus (Saw-scaled viper).